The chain runs to 282 residues: Pantothenate synthetase (282 aa).

26-33 (MGNLHEGH) lines the ATP pocket. Catalysis depends on His33, which acts as the Proton donor. Gln57 lines the (R)-pantoate pocket. Gln57 is a beta-alanine binding site. Position 144 to 147 (144 to 147 (GKKD)) interacts with ATP. Gln150 provides a ligand contact to (R)-pantoate. Residues Val173 and 181 to 184 (LSSR) each bind ATP.

Belongs to the pantothenate synthetase family. As to quaternary structure, homodimer.

The protein resides in the cytoplasm. It catalyses the reaction (R)-pantoate + beta-alanine + ATP = (R)-pantothenate + AMP + diphosphate + H(+). It functions in the pathway cofactor biosynthesis; (R)-pantothenate biosynthesis; (R)-pantothenate from (R)-pantoate and beta-alanine: step 1/1. Catalyzes the condensation of pantoate with beta-alanine in an ATP-dependent reaction via a pantoyl-adenylate intermediate. The polypeptide is Pantothenate synthetase (Cupriavidus taiwanensis (strain DSM 17343 / BCRC 17206 / CCUG 44338 / CIP 107171 / LMG 19424 / R1) (Ralstonia taiwanensis (strain LMG 19424))).